The chain runs to 431 residues: Phosphoribosylamine--glycine ligase (431 aa).

Residues 108-315 enclose the ATP-grasp domain; that stretch reads KDFLARHEIP…LVLLVEAAFA (208 aa). An ATP-binding site is contributed by 134–195; that stretch reads LQEKGAPIVI…EEFLDGEEAS (62 aa). Mg(2+) is bound by residues Glu285 and Asn287.

This sequence belongs to the GARS family. Mg(2+) serves as cofactor. The cofactor is Mn(2+).

The enzyme catalyses 5-phospho-beta-D-ribosylamine + glycine + ATP = N(1)-(5-phospho-beta-D-ribosyl)glycinamide + ADP + phosphate + H(+). Its pathway is purine metabolism; IMP biosynthesis via de novo pathway; N(1)-(5-phospho-D-ribosyl)glycinamide from 5-phospho-alpha-D-ribose 1-diphosphate: step 2/2. In Pseudomonas putida (strain ATCC 47054 / DSM 6125 / CFBP 8728 / NCIMB 11950 / KT2440), this protein is Phosphoribosylamine--glycine ligase.